The sequence spans 311 residues: Methenyltetrahydromethanopterin cyclohydrolase (311 aa).

Belongs to the MCH family.

The protein resides in the cytoplasm. It carries out the reaction 5,10-methenyl-5,6,7,8-tetrahydromethanopterin + H2O = N(5)-formyl-5,6,7,8-tetrahydromethanopterin + H(+). Catalyzes the hydrolysis of methenyl-H(4)MPT(+) to 5-formyl-H(4)MPT. The protein is Methenyltetrahydromethanopterin cyclohydrolase of Halobacterium salinarum (strain ATCC 29341 / DSM 671 / R1).